We begin with the raw amino-acid sequence, 158 residues long: Snaclec mucrocetin subunit alpha (158 aa).

The first 23 residues, methionine 1–alanine 23, serve as a signal peptide directing secretion. Disulfide bonds link cysteine 27–cysteine 38, cysteine 55–cysteine 152, and cysteine 127–cysteine 144. Residues tyrosine 34–lysine 153 form the C-type lectin domain.

The protein belongs to the snaclec family. As to quaternary structure, tetramer of heterodimers of alpha and beta subunits (alphabeta)(4); disulfide-linked. In terms of tissue distribution, expressed by the venom gland.

The protein localises to the secreted. Platelet-agglutinating factor that acts in a vWF-independent manner. Binds specifically to platelet GPIbalpha (GP1BA) to a distinct binding site from that of flavocetin-A. The sequence is that of Snaclec mucrocetin subunit alpha from Protobothrops mucrosquamatus (Taiwan habu).